Reading from the N-terminus, the 485-residue chain is D-alanine--D-alanyl carrier protein ligase (485 aa).

ATP is bound at residue 144 to 145 (TS). Aspartate 189 is a binding site for D-alanine. 284–289 (NTYGPT) is a binding site for ATP. Valine 293 is a binding site for D-alanine. The ATP site is built by aspartate 365 and lysine 473. D-alanine is bound at residue lysine 473.

It belongs to the ATP-dependent AMP-binding enzyme family. DltA subfamily.

Its subcellular location is the cytoplasm. The enzyme catalyses holo-[D-alanyl-carrier protein] + D-alanine + ATP = D-alanyl-[D-alanyl-carrier protein] + AMP + diphosphate. It functions in the pathway cell wall biogenesis; lipoteichoic acid biosynthesis. Its function is as follows. Catalyzes the first step in the D-alanylation of lipoteichoic acid (LTA), the activation of D-alanine and its transfer onto the D-alanyl carrier protein (Dcp) DltC. In an ATP-dependent two-step reaction, forms a high energy D-alanyl-AMP intermediate, followed by transfer of the D-alanyl residue as a thiol ester to the phosphopantheinyl prosthetic group of the Dcp. D-alanylation of LTA plays an important role in modulating the properties of the cell wall in Gram-positive bacteria, influencing the net charge of the cell wall. This Staphylococcus aureus (strain USA300) protein is D-alanine--D-alanyl carrier protein ligase.